Reading from the N-terminus, the 575-residue chain is Proline--tRNA ligase (575 aa).

Belongs to the class-II aminoacyl-tRNA synthetase family. ProS type 1 subfamily. Homodimer.

It localises to the cytoplasm. It catalyses the reaction tRNA(Pro) + L-proline + ATP = L-prolyl-tRNA(Pro) + AMP + diphosphate. In terms of biological role, catalyzes the attachment of proline to tRNA(Pro) in a two-step reaction: proline is first activated by ATP to form Pro-AMP and then transferred to the acceptor end of tRNA(Pro). As ProRS can inadvertently accommodate and process non-cognate amino acids such as alanine and cysteine, to avoid such errors it has two additional distinct editing activities against alanine. One activity is designated as 'pretransfer' editing and involves the tRNA(Pro)-independent hydrolysis of activated Ala-AMP. The other activity is designated 'posttransfer' editing and involves deacylation of mischarged Ala-tRNA(Pro). The misacylated Cys-tRNA(Pro) is not edited by ProRS. The polypeptide is Proline--tRNA ligase (Anaeromyxobacter sp. (strain Fw109-5)).